The following is a 90-amino-acid chain: Probable Fe(2+)-trafficking protein (90 aa).

Belongs to the Fe(2+)-trafficking protein family.

Could be a mediator in iron transactions between iron acquisition and iron-requiring processes, such as synthesis and/or repair of Fe-S clusters in biosynthetic enzymes. The sequence is that of Probable Fe(2+)-trafficking protein from Polaromonas sp. (strain JS666 / ATCC BAA-500).